Reading from the N-terminus, the 470-residue chain is MTGKEKKLWGGRFQEKPSSILERIGESVSFDHKLYKEDIQGSIAHARMLKQIGILSGDELSKIETSLSQIKTELEEGKLEFKSELEDIHMHIESRLTELIGETGKKLHTARSRNDQVTQDVRLYILGRGKEILRSIVSLRFSLYEKAKRSVDVIIPGYTHLQVAQPIRASQYLLSWFWALERDQEFFRFALKASDELALGGGAMAGVNYATDREFLKKELGLSKVSPNSMDGVSSRDHILEFLFACTQLMIHASRICEDIILYSSQEFGILKLSDSLTTGSSIMPQKKNPDIAELIRGKAGRVIGNLNHLLVMLKGLPSTYNRDLQEDKLALFDSVETVEISLEGIREMIEDWVWVPERAESSLKNGFATATDLADFLVYEKKVPFRTAHELVGTLVRVCVEQKRTLFDLPEPDRIAVSEHFVGKEYENAVSLSLSADKKISYGGTSKKRQEEQLKIALESLKQTETLFL.

It belongs to the lyase 1 family. Argininosuccinate lyase subfamily.

Its subcellular location is the cytoplasm. The catalysed reaction is 2-(N(omega)-L-arginino)succinate = fumarate + L-arginine. It participates in amino-acid biosynthesis; L-arginine biosynthesis; L-arginine from L-ornithine and carbamoyl phosphate: step 3/3. The polypeptide is Argininosuccinate lyase (Leptospira borgpetersenii serovar Hardjo-bovis (strain JB197)).